The sequence spans 143 residues: D-aminoacyl-tRNA deacylase (143 aa).

Residues 135-136 (GP) carry the Gly-cisPro motif, important for rejection of L-amino acids motif.

It belongs to the DTD family. Homodimer.

The protein resides in the cytoplasm. It carries out the reaction glycyl-tRNA(Ala) + H2O = tRNA(Ala) + glycine + H(+). It catalyses the reaction a D-aminoacyl-tRNA + H2O = a tRNA + a D-alpha-amino acid + H(+). In terms of biological role, an aminoacyl-tRNA editing enzyme that deacylates mischarged D-aminoacyl-tRNAs. Also deacylates mischarged glycyl-tRNA(Ala), protecting cells against glycine mischarging by AlaRS. Acts via tRNA-based rather than protein-based catalysis; rejects L-amino acids rather than detecting D-amino acids in the active site. By recycling D-aminoacyl-tRNA to D-amino acids and free tRNA molecules, this enzyme counteracts the toxicity associated with the formation of D-aminoacyl-tRNA entities in vivo and helps enforce protein L-homochirality. The sequence is that of D-aminoacyl-tRNA deacylase from Mycobacterium marinum (strain ATCC BAA-535 / M).